Reading from the N-terminus, the 244-residue chain is ATP-dependent dethiobiotin synthetase BioD 1 (244 aa).

Residue 12-17 (NVGKTV) participates in ATP binding. Thr16 contributes to the Mg(2+) binding site. Residue Lys37 is part of the active site. Asp68 contacts ATP. The Mg(2+) site is built by Asp68 and Glu126. ATP-binding positions include 186-187 (NR), 215-217 (PYL), and Glu222.

Belongs to the dethiobiotin synthetase family. Homodimer. It depends on Mg(2+) as a cofactor.

It is found in the cytoplasm. It catalyses the reaction (7R,8S)-7,8-diammoniononanoate + CO2 + ATP = (4R,5S)-dethiobiotin + ADP + phosphate + 3 H(+). It participates in cofactor biosynthesis; biotin biosynthesis; biotin from 7,8-diaminononanoate: step 1/2. In terms of biological role, catalyzes a mechanistically unusual reaction, the ATP-dependent insertion of CO2 between the N7 and N8 nitrogen atoms of 7,8-diaminopelargonic acid (DAPA, also called 7,8-diammoniononanoate) to form a ureido ring. This Pasteurella multocida (strain Pm70) protein is ATP-dependent dethiobiotin synthetase BioD 1.